The following is a 100-amino-acid chain: Histone-like protein p6 (100 aa).

Residues 1–19 (MRKMMQREVTYTTAQLARM) mediate DNA binding.

It belongs to the phi29likevirus histone-like protein p6 family. Homodimer. Homomultimer. Binds to double-stranded DNA giving rise to multimeric nucleoprotein complexes. Binding specificity for the viral DNA is based on supercoiling, the viral genome having a negative superhelicity lower than that of plasmid DNA. Interacts with the DNA replication protein p17; this interaction optimizes the binding of protein p6 at the viral DNA ends, thus favoring the initiation of replication.

In terms of biological role, histone-like nucleoprotein that binds to the viral dsDNA and responsible for wrapping and compacting the viral DNA about 4-fold. Forms a nucleoprotein complex in which the DNA adopts a right-handed toroidal conformation winding around a protein core. Binds ito most, if not all, the viral genome, although with different affinity, the highest one corresponding to the genome ends. The formation of the nucleoprotein complex at the genome ends, activates the initiation of viral DNA replication. The binding of p6 would recruit the complex formed by the TP and the DNA polymerase to the origin. Protein p6 also represses early transcription from promoter C2, and, together with protein p4, represses transcription from promoters A2b and A2c and activates late transcription from promoter A3. Protein p6 is therefore involved in the early to late transcription switch. The formation of the nucleoprotein complex at the right end of the phage genome where the early promoter C2 is located affects local topology, which may contribute to the promoter repression. This is Histone-like protein p6 (6) from Bacillus phage B103 (Bacteriophage B103).